We begin with the raw amino-acid sequence, 179 residues long: Large ribosomal subunit protein uL5 (179 aa).

This sequence belongs to the universal ribosomal protein uL5 family. Part of the 50S ribosomal subunit; part of the 5S rRNA/L5/L18/L25 subcomplex. Contacts the 5S rRNA and the P site tRNA. Forms a bridge to the 30S subunit in the 70S ribosome.

Its function is as follows. This is one of the proteins that bind and probably mediate the attachment of the 5S RNA into the large ribosomal subunit, where it forms part of the central protuberance. In the 70S ribosome it contacts protein S13 of the 30S subunit (bridge B1b), connecting the 2 subunits; this bridge is implicated in subunit movement. Contacts the P site tRNA; the 5S rRNA and some of its associated proteins might help stabilize positioning of ribosome-bound tRNAs. In Marinobacter nauticus (strain ATCC 700491 / DSM 11845 / VT8) (Marinobacter aquaeolei), this protein is Large ribosomal subunit protein uL5.